We begin with the raw amino-acid sequence, 131 residues long: MAKNKFHDGPGPSQRQLRVGEVIRRTLSEVLARGDVHDPDLNRMSITVGEVRTSPDLKIATAYVLPLGGRGQEDVVQLLSRNKGELRRMIGKKLGLKFTPDLRFRLDETFDRLDDTRRMFDQDAVRRDLDE.

Belongs to the RbfA family. As to quaternary structure, monomer. Binds 30S ribosomal subunits, but not 50S ribosomal subunits or 70S ribosomes.

It localises to the cytoplasm. In terms of biological role, one of several proteins that assist in the late maturation steps of the functional core of the 30S ribosomal subunit. Associates with free 30S ribosomal subunits (but not with 30S subunits that are part of 70S ribosomes or polysomes). Required for efficient processing of 16S rRNA. May interact with the 5'-terminal helix region of 16S rRNA. The polypeptide is Ribosome-binding factor A (Ruegeria pomeroyi (strain ATCC 700808 / DSM 15171 / DSS-3) (Silicibacter pomeroyi)).